The primary structure comprises 338 residues: MO25-like protein 2 (338 aa).

This sequence belongs to the Mo25 family.

The protein localises to the cytoplasm. It localises to the cytoskeleton. Its subcellular location is the spindle pole. In terms of biological role, regulates asymmetric cell division in Q.p neuroblast lineage. Plays a role in cell shedding during embryogenesis. The polypeptide is MO25-like protein 2 (mop-25.2) (Caenorhabditis elegans).